A 185-amino-acid chain; its full sequence is Pyruvate/ketoisovalerate oxidoreductases common subunit gamma (185 aa).

Heterotetramer of one alpha, one beta, one delta and one gamma chain.

It carries out the reaction 2 oxidized [2Fe-2S]-[ferredoxin] + pyruvate + CoA = 2 reduced [2Fe-2S]-[ferredoxin] + acetyl-CoA + CO2 + H(+). It catalyses the reaction 3-methyl-2-oxobutanoate + 2 oxidized [2Fe-2S]-[ferredoxin] + CoA = 2-methylpropanoyl-CoA + 2 reduced [2Fe-2S]-[ferredoxin] + CO2 + H(+). This is Pyruvate/ketoisovalerate oxidoreductases common subunit gamma (porG) from Thermococcus kodakarensis (strain ATCC BAA-918 / JCM 12380 / KOD1) (Pyrococcus kodakaraensis (strain KOD1)).